Reading from the N-terminus, the 338-residue chain is MKKVERFEVPRTIIFGPGALEKTPEVIPPSGRVLIITGKSSTRKYAERVAELLKQNCEIISYDQVELEKPGFDLVIGIGGGRPLDMAKVYSYIHKKPFVAIPTSASHDGIASPYVSFSLTQRFSKYGKISSSPVAIIADTSIILSAPSRLLKAGIGDLLGKIIAVRDWQLAHRLKGEEYSEYAAHLSLTSYKIAVGNAQKIKNFIREEDVRVLVKALIGCGVAMGIAGSSRPCSGSEHLFAHAIEVRVEKEDEVVHGELVALGTIIMAYLHGINWRRIKRIADIIGLPTSLRQANIDVDLALEALTTAHTLRPDRYTILGDGLSREAAKRALEDVELI.

Residues 81–85 (GRPLD) and 103–106 (TSAS) each bind NAD(+). A substrate-binding site is contributed by Asp108. An NAD(+)-binding site is contributed by Ser112. Asp157 serves as a coordination point for substrate. The Zn(2+) site is built by Asp157 and His238. Residue His242 participates in substrate binding. His256 provides a ligand contact to Zn(2+).

The protein belongs to the glycerol-1-phosphate dehydrogenase family. As to quaternary structure, homodimer. The cofactor is Zn(2+).

The protein localises to the cytoplasm. The catalysed reaction is sn-glycerol 1-phosphate + NAD(+) = dihydroxyacetone phosphate + NADH + H(+). It carries out the reaction sn-glycerol 1-phosphate + NADP(+) = dihydroxyacetone phosphate + NADPH + H(+). The protein operates within membrane lipid metabolism; glycerophospholipid metabolism. Catalyzes the NAD(P)H-dependent reduction of dihydroxyacetonephosphate (DHAP or glycerone phosphate) to glycerol 1-phosphate (G1P). The G1P thus generated is used as the glycerophosphate backbone of phospholipids in the cellular membranes of Archaea. This is Glycerol-1-phosphate dehydrogenase [NAD(P)+] from Pyrobaculum calidifontis (strain DSM 21063 / JCM 11548 / VA1).